The following is a 427-amino-acid chain: Imidazolonepropionase (427 aa).

Positions 81 and 83 each coordinate Fe(3+). The Zn(2+) site is built by His81 and His83. Residues Arg90, Tyr153, and His186 each coordinate 4-imidazolone-5-propanoate. Tyr153 is a binding site for N-formimidoyl-L-glutamate. His260 contributes to the Fe(3+) binding site. Position 260 (His260) interacts with Zn(2+). 4-imidazolone-5-propanoate is bound at residue Glu263. Residue Asp335 coordinates Fe(3+). Asp335 contacts Zn(2+). Positions 337 and 339 each coordinate N-formimidoyl-L-glutamate. Ser340 contributes to the 4-imidazolone-5-propanoate binding site.

The protein belongs to the metallo-dependent hydrolases superfamily. HutI family. The cofactor is Zn(2+). Requires Fe(3+) as cofactor.

Its subcellular location is the cytoplasm. The enzyme catalyses 4-imidazolone-5-propanoate + H2O = N-formimidoyl-L-glutamate. It functions in the pathway amino-acid degradation; L-histidine degradation into L-glutamate; N-formimidoyl-L-glutamate from L-histidine: step 3/3. Catalyzes the hydrolytic cleavage of the carbon-nitrogen bond in imidazolone-5-propanoate to yield N-formimidoyl-L-glutamate. It is the third step in the universal histidine degradation pathway. This chain is Imidazolonepropionase, found in Chloroflexus aggregans (strain MD-66 / DSM 9485).